The chain runs to 298 residues: Oligodendrocyte transcription factor 2 (298 aa).

Residues 1–13 (MDSDASLVSSRPS) show a composition bias toward polar residues. Disordered regions lie at residues 1–60 (MDSD…SAEL) and 79–102 (SSSS…MTEP). Residues 26-41 (NKGGGGGGGGGGGFTG) are compositionally biased toward gly residues. The segment covering 79–91 (SSSSSASSASSAS) has biased composition (low complexity). One can recognise a bHLH domain in the interval 106–160 (QLRLKINSRERKRMHDLNIAMDGLREVMPYAHGPSVRKLSKIATLLLARNYILML).

It localises to the nucleus. Functionally, required for oligodendrocyte and motor neuron specification in the spinal cord. This Gallus gallus (Chicken) protein is Oligodendrocyte transcription factor 2 (OLIG2).